The sequence spans 163 residues: Thiol peroxidase (163 aa).

The 147-residue stretch at 16–162 (LQVGDTAHDF…YDAAIAAVKN (147 aa)) folds into the Thioredoxin domain. Cysteine 58 acts as the Cysteine sulfenic acid (-SOH) intermediate in catalysis. Cysteine 58 and cysteine 92 are joined by a disulfide.

This sequence belongs to the peroxiredoxin family. Tpx subfamily. Homodimer.

It carries out the reaction a hydroperoxide + [thioredoxin]-dithiol = an alcohol + [thioredoxin]-disulfide + H2O. Its function is as follows. Thiol-specific peroxidase that catalyzes the reduction of hydrogen peroxide and organic hydroperoxides to water and alcohols, respectively. Plays a role in cell protection against oxidative stress by detoxifying peroxides. The chain is Thiol peroxidase from Streptococcus gordonii.